The sequence spans 293 residues: Methoxy mycolic acid synthase MmaA3 (293 aa).

S-adenosyl-L-methionine is bound by residues 39 to 40, 78 to 80, 100 to 105, 129 to 130, and I142; these read YS, GCG, TLSKNQ, and WA. Residue C275 is part of the active site.

The protein belongs to the CFA/CMAS family.

It functions in the pathway lipid metabolism; mycolic acid biosynthesis. In terms of biological role, involved in the biosynthesis of methoxymycolic acid. It catalyzes the O-methylation of the hydroxy group of the hydroxymycolate to form a methyl ether. In Mycobacterium bovis (strain ATCC BAA-935 / AF2122/97), this protein is Methoxy mycolic acid synthase MmaA3 (cmaB).